The following is a 195-amino-acid chain: MKMNFFNSFPQYGVYILGLNLLLCGVSEGFIGFGMDGFEEMFPLLMLGGMNGGQSNYVRPKPIAPTLPPTPPPPMVKPPSITWRWVPNTRYTWPLFNNMQWPQYNPYVLPLANNAMAKTGSAFNTNTISGTKASSGNAMPVLPAPNAQMISSGGPVPPAAGLMNGMGMGLAGSNMAAANQMTWNTQTTSKGSTPM.

The signal sequence occupies residues methionine 1–glycine 29.

In terms of tissue distribution, component of the acid-insoluble organic matrix of calcified layers of the shell (at protein level).

The protein resides in the secreted. The protein is Proline-rich protein 3 of Lottia gigantea (Giant owl limpet).